The primary structure comprises 301 residues: Very-long-chain aldehyde decarbonylase GL1-10 (301 aa).

The next 3 helical transmembrane spans lie at Val36–Val56, Phe94–Ile114, and Ser187–Leu207. Residues Leu131 to Thr265 form the Fatty acid hydroxylase domain.

This sequence belongs to the sterol desaturase family. As to quaternary structure, homodimer. In terms of tissue distribution, expressed ubiquitously.

It localises to the endoplasmic reticulum membrane. The catalysed reaction is a long-chain fatty aldehyde + 2 NADPH + O2 + H(+) = a long-chain alkane + formate + 2 NADP(+) + H2O. Aldehyde decarbonylase involved in the conversion of aldehydes to alkanes. Core component of a very-long-chain alkane synthesis complex. In Oryza sativa subsp. japonica (Rice), this protein is Very-long-chain aldehyde decarbonylase GL1-10.